A 189-amino-acid chain; its full sequence is Peptidyl-tRNA hydrolase (189 aa).

Residue Tyr14 participates in tRNA binding. Catalysis depends on His19, which acts as the Proton acceptor. 3 residues coordinate tRNA: Phe64, Asn66, and Asn112.

It belongs to the PTH family. As to quaternary structure, monomer.

Its subcellular location is the cytoplasm. It carries out the reaction an N-acyl-L-alpha-aminoacyl-tRNA + H2O = an N-acyl-L-amino acid + a tRNA + H(+). In terms of biological role, hydrolyzes ribosome-free peptidyl-tRNAs (with 1 or more amino acids incorporated), which drop off the ribosome during protein synthesis, or as a result of ribosome stalling. Functionally, catalyzes the release of premature peptidyl moieties from peptidyl-tRNA molecules trapped in stalled 50S ribosomal subunits, and thus maintains levels of free tRNAs and 50S ribosomes. The chain is Peptidyl-tRNA hydrolase from Rhizorhabdus wittichii (strain DSM 6014 / CCUG 31198 / JCM 15750 / NBRC 105917 / EY 4224 / RW1) (Sphingomonas wittichii).